A 504-amino-acid polypeptide reads, in one-letter code: Putative glycerol-3-phosphate transporter 2 (504 aa).

Helical transmembrane passes span 31–51 (LSFK…YIAF), 84–104 (ALLG…MFVA), 116–136 (FLTI…VAFW), 145–165 (FLAV…CIVA), 178–198 (MIMG…SLIA), 210–230 (FLGP…FLPV), 280–302 (IPGV…TFLY), 324–344 (GNLS…AGYI), 352–372 (AITA…YRVF), 378–398 (TINV…FALI), 424–444 (AIID…TGYI), and 452–472 (VFYM…KLII).

The protein belongs to the major facilitator superfamily. Organophosphate:Pi antiporter (OPA) (TC 2.A.1.4) family. Expressed in the root-hair differentiation zone.

The protein localises to the membrane. This Arabidopsis thaliana (Mouse-ear cress) protein is Putative glycerol-3-phosphate transporter 2.